We begin with the raw amino-acid sequence, 375 residues long: MMKQYYIGVMSGTSLDGVDLALMDFTLNPPKLMATDFTPMPEKIREKLTALLRSGETSLRNLGEIDHQLGLLYAESINRFLQKVRLKSEDICAVGCHGQTVWHSPNCEFPFTMQIGDMNLVAAKTGITTVGDFRRKDMALGGQGAPLVPAFHQDLFFAAERLTVVLNIGGISNISVLEENCPTVGYDVSVGNALLDSWIELHQGKRYDKDALWAKNGKISTALLTDLLAEPFFQQAPPKSTGRELFNLAWLNKKLEKFTALSQPMPSPQDVQRTLVEFTALSIANELKKLQKSDRTNLLLVCGGGARNPLIMQRLTALLAEWQVSTTSEFGLDIDYVEAAAFAWLAYRRIHNLPSNLPSVTGAKSEVSLGVIFPK.

12-19 serves as a coordination point for ATP; that stretch reads GTSLDGVD.

Belongs to the anhydro-N-acetylmuramic acid kinase family.

It catalyses the reaction 1,6-anhydro-N-acetyl-beta-muramate + ATP + H2O = N-acetyl-D-muramate 6-phosphate + ADP + H(+). It functions in the pathway amino-sugar metabolism; 1,6-anhydro-N-acetylmuramate degradation. Its pathway is cell wall biogenesis; peptidoglycan recycling. In terms of biological role, catalyzes the specific phosphorylation of 1,6-anhydro-N-acetylmuramic acid (anhMurNAc) with the simultaneous cleavage of the 1,6-anhydro ring, generating MurNAc-6-P. Is required for the utilization of anhMurNAc either imported from the medium or derived from its own cell wall murein, and thus plays a role in cell wall recycling. This Mannheimia succiniciproducens (strain KCTC 0769BP / MBEL55E) protein is Anhydro-N-acetylmuramic acid kinase.